The sequence spans 325 residues: Cytochrome c1, heme protein, mitochondrial (325 aa).

A mitochondrion-targeting transit peptide spans 1 to 84 (MAAAAATLRG…AVALHSAVSA (84 aa)). Topologically, residues 85–281 (SDLELHPPSY…TFLRWAAEPE (197 aa)) are mitochondrial intermembrane. Residues 108-209 (TSIRRGFQVY…IVRARHGGED (102 aa)) enclose the Cytochrome c domain. The heme c site is built by Cys121, Cys124, His125, and Met244. The helical transmembrane segment at 282 to 315 (HDHRKRMGLKMLLMMGLLLPLVYAMKRHKWSVLK) threads the bilayer. The Mitochondrial matrix segment spans residues 316–325 (SRKLAYRPPK).

It belongs to the cytochrome c family. As to quaternary structure, component of the ubiquinol-cytochrome c oxidoreductase (cytochrome b-c1 complex, complex III, CIII), a multisubunit enzyme composed of 11 subunits. The complex is composed of 3 respiratory subunits cytochrome b, cytochrome c1 and Rieske protein UQCRFS1, 2 core protein subunits UQCRC1/QCR1 and UQCRC2/QCR2, and 6 low-molecular weight protein subunits UQCRH/QCR6, UQCRB/QCR7, UQCRQ/QCR8, UQCR10/QCR9, UQCR11/QCR10 and subunit 9, the cleavage product of Rieske protein UQCRFS1. The complex exists as an obligatory dimer and forms supercomplexes (SCs) in the inner mitochondrial membrane with NADH-ubiquinone oxidoreductase (complex I, CI) and cytochrome c oxidase (complex IV, CIV), resulting in different assemblies (supercomplex SCI(1)III(2)IV(1) and megacomplex MCI(2)III(2)IV(2)). Interacts with FLVCR2; this interaction occurs in the absence of heme and is disrupted upon heme binding. Heme c is required as a cofactor.

Its subcellular location is the mitochondrion inner membrane. The catalysed reaction is a quinol + 2 Fe(III)-[cytochrome c](out) = a quinone + 2 Fe(II)-[cytochrome c](out) + 2 H(+)(out). Component of the ubiquinol-cytochrome c oxidoreductase, a multisubunit transmembrane complex that is part of the mitochondrial electron transport chain which drives oxidative phosphorylation. The respiratory chain contains 3 multisubunit complexes succinate dehydrogenase (complex II, CII), ubiquinol-cytochrome c oxidoreductase (cytochrome b-c1 complex, complex III, CIII) and cytochrome c oxidase (complex IV, CIV), that cooperate to transfer electrons derived from NADH and succinate to molecular oxygen, creating an electrochemical gradient over the inner membrane that drives transmembrane transport and the ATP synthase. The cytochrome b-c1 complex catalyzes electron transfer from ubiquinol to cytochrome c, linking this redox reaction to translocation of protons across the mitochondrial inner membrane, with protons being carried across the membrane as hydrogens on the quinol. In the process called Q cycle, 2 protons are consumed from the matrix, 4 protons are released into the intermembrane space and 2 electrons are passed to cytochrome c. Cytochrome c1 is a catalytic core subunit containing a c-type heme. It transfers electrons from the [2Fe-2S] iron-sulfur cluster of the Rieske protein to cytochrome c. The chain is Cytochrome c1, heme protein, mitochondrial (CYC1) from Bos taurus (Bovine).